The primary structure comprises 265 residues: Glutamate racemase (265 aa).

Residues 7–8 (DS) and 39–40 (YG) contribute to the substrate site. The active-site Proton donor/acceptor is the C70. 71–72 (NT) provides a ligand contact to substrate. The active-site Proton donor/acceptor is C182. 183–184 (TH) lines the substrate pocket.

This sequence belongs to the aspartate/glutamate racemases family.

It catalyses the reaction L-glutamate = D-glutamate. It participates in cell wall biogenesis; peptidoglycan biosynthesis. In terms of biological role, provides the (R)-glutamate required for cell wall biosynthesis. The protein is Glutamate racemase of Lachnospira eligens (strain ATCC 27750 / DSM 3376 / VPI C15-48 / C15-B4) (Eubacterium eligens).